Here is a 145-residue protein sequence, read N- to C-terminus: Large ribosomal subunit protein uL11 (145 aa).

Belongs to the universal ribosomal protein uL11 family. Part of the ribosomal stalk of the 50S ribosomal subunit. Interacts with L10 and the large rRNA to form the base of the stalk. L10 forms an elongated spine to which L12 dimers bind in a sequential fashion forming a multimeric L10(L12)X complex. Post-translationally, one or more lysine residues are methylated.

Forms part of the ribosomal stalk which helps the ribosome interact with GTP-bound translation factors. This chain is Large ribosomal subunit protein uL11, found in Corynebacterium glutamicum (strain ATCC 13032 / DSM 20300 / JCM 1318 / BCRC 11384 / CCUG 27702 / LMG 3730 / NBRC 12168 / NCIMB 10025 / NRRL B-2784 / 534).